Reading from the N-terminus, the 408-residue chain is Bone morphogenetic protein 4 (408 aa).

A signal peptide spans Met-1 to Gly-19. A propeptide spanning residues Gly-20–Arg-292 is cleaved from the precursor. Phosphoserine is present on Ser-91. Positions Ser-91–Ser-113 are disordered. 2 N-linked (GlcNAc...) asparagine glycosylation sites follow: Asn-144 and Asn-209. The interval Arg-281–Asn-307 is disordered. Over residues Thr-284–Asn-307 the composition is skewed to basic residues. 3 disulfide bridges follow: Cys-308–Cys-373, Cys-337–Cys-405, and Cys-341–Cys-407. N-linked (GlcNAc...) asparagine glycans are attached at residues Asn-350 and Asn-365.

Belongs to the TGF-beta family. Homodimer; disulfide-linked. Interacts with GREM2. Part of a complex consisting of TWSG1 and CHRD. Interacts with the serine proteases, HTRA1 and HTRA3; the interaction with either inhibits BMP4-mediated signaling. The HTRA protease activity is required for this inhibition. Interacts with SOSTDC1. Interacts with FBN1 (via N-terminal domain) and FBN2. Interacts with type I receptor BMPR1A. Interacts with type II receptor BMPR2. Interacts with FSTL1; this interaction inhibits the activation of the BMP4/Smad1/5/8 signaling pathway. Interacts with SCUBE3. Interacts with TGFBR3.

The protein resides in the secreted. It localises to the extracellular space. Its subcellular location is the extracellular matrix. Its function is as follows. Growth factor of the TGF-beta superfamily that plays essential roles in many developmental processes, including neurogenesis, vascular development, angiogenesis and osteogenesis. Acts in concert with PTHLH/PTHRP to stimulate ductal outgrowth during embryonic mammary development and to inhibit hair follicle induction. Initiates the canonical BMP signaling cascade by associating with type I receptor BMPR1A and type II receptor BMPR2. Once all three components are bound together in a complex at the cell surface, BMPR2 phosphorylates and activates BMPR1A. In turn, BMPR1A propagates signal by phosphorylating SMAD1/5/8 that travel to the nucleus and act as activators and repressors of transcription of target genes. Positively regulates the expression of odontogenic development regulator MSX1 via inducing the IPO7-mediated import of SMAD1 to the nucleus. Required for MSX1-mediated mesenchymal molar tooth bud development beyond the bud stage, via promoting Wnt signaling. Acts as a positive regulator of odontoblast differentiation during mesenchymal tooth germ formation, expression is repressed during the bell stage by MSX1-mediated inhibition of CTNNB1 signaling. Able to induce its own expression in dental mesenchymal cells and also in the neighboring dental epithelial cells via an MSX1-mediated pathway. Can also signal through non-canonical BMP pathways such as ERK/MAP kinase, PI3K/Akt, or SRC cascades. For example, induces SRC phosphorylation which, in turn, activates VEGFR2, leading to an angiogenic response. This is Bone morphogenetic protein 4 from Rattus norvegicus (Rat).